The primary structure comprises 506 residues: Maturase K (506 aa).

It belongs to the intron maturase 2 family. MatK subfamily.

Its subcellular location is the plastid. The protein resides in the chloroplast. Its function is as follows. Usually encoded in the trnK tRNA gene intron. Probably assists in splicing its own and other chloroplast group II introns. The chain is Maturase K from Manihot esculenta (Cassava).